The following is a 343-amino-acid chain: Dihydroorotase (343 aa).

Residues histidine 13 and histidine 15 each contribute to the Zn(2+) site. Residues 15-17 (HLR) and asparagine 41 contribute to the substrate site. Residues lysine 99, histidine 136, and histidine 174 each contribute to the Zn(2+) site. N6-carboxylysine is present on lysine 99. Position 136 (histidine 136) interacts with substrate. Substrate is bound at residue leucine 219. Zn(2+) is bound at residue aspartate 247. The active site involves aspartate 247. Residues histidine 251 and alanine 263 each contribute to the substrate site.

This sequence belongs to the metallo-dependent hydrolases superfamily. DHOase family. Class II DHOase subfamily. As to quaternary structure, homodimer. It depends on Zn(2+) as a cofactor.

The enzyme catalyses (S)-dihydroorotate + H2O = N-carbamoyl-L-aspartate + H(+). It functions in the pathway pyrimidine metabolism; UMP biosynthesis via de novo pathway; (S)-dihydroorotate from bicarbonate: step 3/3. Its function is as follows. Catalyzes the reversible cyclization of carbamoyl aspartate to dihydroorotate. In Shewanella baltica (strain OS195), this protein is Dihydroorotase.